The following is a 690-amino-acid chain: Guanylate cyclase soluble subunit alpha-1 (690 aa).

Phosphoserine is present on S267. Positions T481 to E608 constitute a Guanylate cyclase domain.

The protein belongs to the adenylyl cyclase class-4/guanylyl cyclase family. The active enzyme is formed by a heterodimer of an alpha and a beta subunit. Heterodimer with GUCY1B1. It depends on Mg(2+) as a cofactor. Mn(2+) is required as a cofactor.

The protein resides in the cytoplasm. The enzyme catalyses GTP = 3',5'-cyclic GMP + diphosphate. Its activity is regulated as follows. Activated by nitric oxide in the presence of magnesium or manganese ions. The polypeptide is Guanylate cyclase soluble subunit alpha-1 (GUCY1A1) (Canis lupus familiaris (Dog)).